The following is a 491-amino-acid chain: Transcription factor unc-3 (491 aa).

The interaction with DNA stretch occupies residues 66–69; it reads RKSN. The segment at 154-173 adopts a C5-type zinc-finger fold; sequence CRVLLTHEVMCSRCCEKKSC. Interaction with DNA regions lie at residues 200–207 and 239–242; these read NCLKNAGN and NNSK. The segment at 240-261 is disordered; that stretch reads NSKHGRRTKRTDASDDSEYSES. The IPT/TIG domain maps to 269 to 355; that stretch reads PVIKALFPSE…SRGTPLRFSY (87 aa).

Belongs to the COE family. As to quaternary structure, may homodimerise. Interacts with jmjd-3.1. May interact with GFI1 homolog pag-3.

It localises to the nucleus. Transcription factor. Involved in motor neuron fate determination and maintenance, acting as an activator of gene expression in a subset of motor neurons. May act in concert with GFI1 homolog pag-3 in motor neuron fate determination. Required to maintain the expression of transcriptional repressors bnc-1 and cfi-1, which play roles in the cell fate of motor neurons. May play a role in the expression of proteins essential for axonal pathfinding and/or neuronal differentiation in both sensory and motor neurons. Cooperates with jmjd-3.1 and wdr-5.1 to ensure robust transdifferentiation of the Y rectal cell to the PDA motor neuron during larval development. The polypeptide is Transcription factor unc-3 (unc-3) (Caenorhabditis elegans).